The primary structure comprises 279 residues: Phosphatidylglycerol--prolipoprotein diacylglyceryl transferase (279 aa).

7 consecutive transmembrane segments (helical) span residues 22 to 42 (SAHW…WSSI), 58 to 78 (ILYF…VIFY), 89 to 109 (FIFK…GSII), 128 to 148 (FLVP…FING), 195 to 215 (ISQL…LNIF), 223 to 243 (GYMS…AEFF), and 256 to 276 (YISL…ILII). R141 is an a 1,2-diacyl-sn-glycero-3-phospho-(1'-sn-glycerol) binding site.

Belongs to the Lgt family.

It localises to the cell membrane. The catalysed reaction is L-cysteinyl-[prolipoprotein] + a 1,2-diacyl-sn-glycero-3-phospho-(1'-sn-glycerol) = an S-1,2-diacyl-sn-glyceryl-L-cysteinyl-[prolipoprotein] + sn-glycerol 1-phosphate + H(+). It participates in protein modification; lipoprotein biosynthesis (diacylglyceryl transfer). Functionally, catalyzes the transfer of the diacylglyceryl group from phosphatidylglycerol to the sulfhydryl group of the N-terminal cysteine of a prolipoprotein, the first step in the formation of mature lipoproteins. This is Phosphatidylglycerol--prolipoprotein diacylglyceryl transferase from Wigglesworthia glossinidia brevipalpis.